The sequence spans 310 residues: Tagatose-6-phosphate kinase (310 aa).

Belongs to the carbohydrate kinase PfkB family. LacC subfamily.

It catalyses the reaction D-tagatofuranose 6-phosphate + ATP = D-tagatofuranose 1,6-bisphosphate + ADP + H(+). The protein operates within carbohydrate metabolism; D-tagatose 6-phosphate degradation; D-glyceraldehyde 3-phosphate and glycerone phosphate from D-tagatose 6-phosphate: step 1/2. This chain is Tagatose-6-phosphate kinase, found in Streptococcus agalactiae serotype V (strain ATCC BAA-611 / 2603 V/R).